We begin with the raw amino-acid sequence, 363 residues long: DNA replication and repair protein RecF (363 aa).

30–37 (GPNGSGKT) serves as a coordination point for ATP.

The protein belongs to the RecF family.

The protein resides in the cytoplasm. Its function is as follows. The RecF protein is involved in DNA metabolism; it is required for DNA replication and normal SOS inducibility. RecF binds preferentially to single-stranded, linear DNA. It also seems to bind ATP. The chain is DNA replication and repair protein RecF from Chlorobium limicola (strain DSM 245 / NBRC 103803 / 6330).